A 475-amino-acid chain; its full sequence is Protein arginine N-methyltransferase 2 (475 aa).

The segment at 167 to 194 is disordered; that stretch reads EFLSDDDDEEMDVDDDEEDESRDGEETG. Residues 169–194 are compositionally biased toward acidic residues; the sequence is LSDDDDEEMDVDDDEEDESRDGEETG. In terms of domain architecture, RMT2 spans 247–475; sequence LAGSQMDYLK…EDFYLPVCTF (229 aa). Residues Y254, M285, 310–315, 331–333, 358–359, and D378 each bind S-adenosyl-L-methionine; these read FGLGII, EAH, and WQ.

This sequence belongs to the class I-like SAM-binding methyltransferase superfamily. RMT2 methyltransferase family. As to quaternary structure, monomer.

It localises to the cytoplasm. The protein resides in the nucleus. Functionally, S-adenosyl-L-methionine-dependent protein-arginine N-methyltransferase that methylates the delta-nitrogen atom of arginine residues to form N5-methylarginine (type IV) in target proteins. Monomethylates ribosomal protein L12. In Yarrowia lipolytica (strain CLIB 122 / E 150) (Yeast), this protein is Protein arginine N-methyltransferase 2.